Consider the following 569-residue polypeptide: Lysine--tRNA ligase (569 aa).

The Mg(2+) site is built by E414 and E421.

Belongs to the class-II aminoacyl-tRNA synthetase family. Homodimer. It depends on Mg(2+) as a cofactor.

The protein resides in the cytoplasm. It catalyses the reaction tRNA(Lys) + L-lysine + ATP = L-lysyl-tRNA(Lys) + AMP + diphosphate. This Christiangramia forsetii (strain DSM 17595 / CGMCC 1.15422 / KT0803) (Gramella forsetii) protein is Lysine--tRNA ligase.